The chain runs to 165 residues: UPF0303 protein Bphyt_1734 (165 aa).

It belongs to the UPF0303 family.

The protein is UPF0303 protein Bphyt_1734 of Paraburkholderia phytofirmans (strain DSM 17436 / LMG 22146 / PsJN) (Burkholderia phytofirmans).